Reading from the N-terminus, the 66-residue chain is Defensin-like peptide 2/4 (66 aa).

An N-terminal signal peptide occupies residues 1–22 (MRLAYLLLLLVAVLFQAGGGSA). The propeptide occupies 23 to 24 (KP). Methionine 26 bears the D-methionine; in form DLP-2 mark. 3 cysteine pairs are disulfide-bonded: cysteine 33–cysteine 63, cysteine 40–cysteine 56, and cysteine 48–cysteine 64.

Stereoinversion of L-Met-26 (in DLP-4) to D-Met-26 (in DLP-2). Produced by the crural gland and detected in venom from the spur located on each male hind leg. Is also widely expressed in both male and female tissues, including brain, intestine, kidney, lung, spleen and testis.

It is found in the secreted. Its function is as follows. Does not show antimicrobial, myotoxic, hemolytic and cell-promoting activities. This chain is Defensin-like peptide 2/4, found in Ornithorhynchus anatinus (Duckbill platypus).